The following is a 1179-amino-acid chain: DNA-directed RNA polymerase subunit beta (1179 aa).

The segment covering 1153-1162 (MREMEDEDEG) has biased composition (acidic residues). Positions 1153–1179 (MREMEDEDEGNGEKLNLVLEGGSLNEE) are disordered.

It belongs to the RNA polymerase beta chain family. The RNAP catalytic core consists of 2 alpha, 1 beta, 1 beta' and 1 omega subunit. When a sigma factor is associated with the core the holoenzyme is formed, which can initiate transcription.

It carries out the reaction RNA(n) + a ribonucleoside 5'-triphosphate = RNA(n+1) + diphosphate. In terms of biological role, DNA-dependent RNA polymerase catalyzes the transcription of DNA into RNA using the four ribonucleoside triphosphates as substrates. The sequence is that of DNA-directed RNA polymerase subunit beta from Brevibacillus brevis (strain 47 / JCM 6285 / NBRC 100599).